Consider the following 654-residue polypeptide: MAGSTIELRGLRREFPSGEATVVALQDLDLTIEPGEMVAIMGASGSGKSTLMNILGCLDRPTSGSYRIAGRETSSLEADELSALRREHFGFIFQRYHLLPALSALGNVEIPAIYAGQPGEARRARAGELLARLGLADRSGHRPNQLSGGQQQRVSIARALMNGADVILADEPTGALDQRSGTEVLQILDELNRDGKTVIIVTHDASVAARAKRVIELRDGVVVADRLTSPEAARRAGDAPTRQPPATPRWNWRREYDRISEATRIAVLAMAAHRLRSFLTMLGIIIGIASVVFVVAVGDAAKRKVLADISSLGTNTIEIFPGKDMGDVRSSKIKTLVAADARALAQQPYIDGVTPTVSTTSTLRYGGLEANALVNGVGDQYFDVKGTKLASGRFFDASGLRDIVQDVVIDEKTRQTFFADVAGGAVGKVILIGKVPCRIVGVMQQQQSGFGSNQNLSVYLPYTTVQARFLGNSSLRSILLKVSDTVATADAEQDVTRFLTLRHRVKDFVILNTDDIRKTITSTTGTLTLMIAAIAVISLVVGGIGVMNIMLVSVSERVGEIGVRMAVGARRSDILQQFLIEAVVVCLIGGGLGVGVAFGLAALFNLVVPMFPLSLSGTSIAAAFVCSTGIGIVFGYLPARQASFLDPLAALSRD.

Residues 6–244 (IELRGLRREF…RAGDAPTRQP (239 aa)) form the ABC transporter domain. 42 to 49 (GASGSGKS) lines the ATP pocket. 4 helical membrane passes run 278–298 (FLTM…VAVG), 527–547 (LTLM…IGVM), 584–604 (VVCL…AALF), and 619–639 (SIAA…YLPA).

It belongs to the ABC transporter superfamily. Macrolide exporter (TC 3.A.1.122) family. In terms of assembly, homodimer.

It is found in the cell inner membrane. Non-canonical ABC transporter that contains transmembrane domains (TMD), which form a pore in the inner membrane, and an ATP-binding domain (NBD), which is responsible for energy generation. Confers resistance against macrolides. The polypeptide is Macrolide export ATP-binding/permease protein MacB (Rhodopseudomonas palustris (strain HaA2)).